The primary structure comprises 232 residues: RNA chaperone ProQ (232 aa).

The interval 105–182 (EAKARVQAQR…REEQHTPVSD (78 aa)) is disordered. Over residues 117–136 (QQAKKREAAAAAGEKEDAPR) the composition is skewed to basic and acidic residues. A compositionally biased stretch (basic residues) spans 137–146 (RERKPRPTTP). A compositionally biased stretch (basic and acidic residues) spans 147 to 177 (RRKEGAERKPRAQKPVEKAPKTVKAPREEQH).

Belongs to the ProQ family.

The protein resides in the cytoplasm. Its function is as follows. RNA chaperone with significant RNA binding, RNA strand exchange and RNA duplexing activities. May regulate ProP activity through an RNA-based, post-transcriptional mechanism. In Escherichia coli (strain ATCC 8739 / DSM 1576 / NBRC 3972 / NCIMB 8545 / WDCM 00012 / Crooks), this protein is RNA chaperone ProQ.